A 423-amino-acid polypeptide reads, in one-letter code: Growth hormone-releasing hormone receptor (423 aa).

The first 22 residues, 1–22 (MDGLMWATRILCLLSLCGVTLG), serve as a signal peptide directing secretion. At 23–130 (HLHLECDFIT…KEKSYFSTVK (108 aa)) the chain is on the extracellular side. Intrachain disulfides connect Cys41–Cys64, Cys55–Cys96, and Cys78–Cys112. N-linked (GlcNAc...) asparagine glycans are attached at residues Asn49 and Asn50. A helical membrane pass occupies residues 131 to 151 (IIYTTGHSISIVALCVAIAIL). Topologically, residues 152 to 167 (VALRRLHCPRNYIHTQ) are cytoplasmic. The helical transmembrane segment at 168–188 (LFATFILKASAVFLKDAAIFQ) threads the bilayer. The Extracellular segment spans residues 189–210 (GDSTDHCSMSTVLCKVSVAISH). The helical transmembrane segment at 211 to 231 (LATMTNFSWLLAEAVYLSCLL) threads the bilayer. The Cytoplasmic segment spans residues 232–240 (ASTSPRSKP). Residues 241 to 261 (AFWWLVLAGWGLPVLCTGTWV) traverse the membrane as a helical segment. Over 262–283 (GCKLAFEDTECWDLDNSSPCWW) the chain is Extracellular. Residues 284-304 (IIKGPIVLSVGVNFGLFLNII) form a helical membrane-spanning segment. The Cytoplasmic segment spans residues 305–331 (CILLRKLEPAQGGLHTRAQYWRLSKST). A helical membrane pass occupies residues 332–352 (LLLIPLFGIHYIIFNFLPDSA). At 353–357 (GLDIR) the chain is on the extracellular side. Residues 358–378 (VPLELGLGSFQGFIVAVLYCF) form a helical membrane-spanning segment. The Cytoplasmic portion of the chain corresponds to 379–423 (LNQEVRTEISRKWYGHDPELLPARRTCTEWTTPPRSRLKVLTSEC).

The protein belongs to the G-protein coupled receptor 2 family. Pituitary gland.

It localises to the cell membrane. Functionally, receptor for GRF, coupled to G proteins which activate adenylyl cyclase. Stimulates somatotroph cell growth, growth hormone gene transcription and growth hormone secretion. The protein is Growth hormone-releasing hormone receptor (Ghrhr) of Mus musculus (Mouse).